Reading from the N-terminus, the 279-residue chain is Alcohol dehydrogenase-related 31 kDa protein (279 aa).

11–34 is an NAD(+) binding site; sequence YVADCGGIALETSKVLMTKNIAKL. Residue Ser-139 coordinates substrate. Catalysis depends on Tyr-152, which acts as the Proton acceptor.

It belongs to the short-chain dehydrogenases/reductases (SDR) family.

The polypeptide is Alcohol dehydrogenase-related 31 kDa protein (Adhr) (Drosophila guanche (Fruit fly)).